The primary structure comprises 203 residues: A-type ATP synthase subunit E (203 aa).

This sequence belongs to the V-ATPase E subunit family. As to quaternary structure, has multiple subunits with at least A(3), B(3), C, D, E, F, H, I and proteolipid K(x).

The protein resides in the cell membrane. Functionally, component of the A-type ATP synthase that produces ATP from ADP in the presence of a proton gradient across the membrane. This is A-type ATP synthase subunit E from Thermococcus onnurineus (strain NA1).